Reading from the N-terminus, the 262-residue chain is MTALSEIFVPLHRIIPFSNVEGQGNRSSIFLQGCKLNCLYCHNPETIPRYTESAKLVSLQYLYEQVMEAVPFIRGVTVSGGEPTIHHKKLVPLFKALRSQGLTCYLDSSGFFEFDRVCSLIDVTDKFLFDLKGEGIGLQTLCFDRKNQAGIVPQQVIPERLHIKNDKLERNLQNLAALLPLNKVEEVRLVFLKHFFDAEHLVGKVAQLLRNYPDVALKIIRVHSKGVRDEAGLSAYIPSVEETNALSAYARQCGINKILTIL.

The 243-residue stretch at 20–262 (VEGQGNRSSI…CGINKILTIL (243 aa)) folds into the Radical SAM core domain. The [4Fe-4S] cluster site is built by C34, C38, and C41. S-adenosyl-L-methionine contacts are provided by residues 40-42 (YCH), G81, and 130-132 (DLK).

This sequence belongs to the organic radical-activating enzymes family. Requires [4Fe-4S] cluster as cofactor.

The catalysed reaction is glycyl-[protein] + reduced [flavodoxin] + S-adenosyl-L-methionine = glycin-2-yl radical-[protein] + semiquinone [flavodoxin] + 5'-deoxyadenosine + L-methionine + H(+). The sequence is that of Putative glycyl-radical enzyme activating enzyme HI_0520 from Haemophilus influenzae (strain ATCC 51907 / DSM 11121 / KW20 / Rd).